Consider the following 822-residue polypeptide: MSSKTWDDDFVRQVPSFQWIIDQSLEDEVEAASLQVQEPADGVAIDGSLASFKLAIAPLEIGGVFDPPFDRVRWGSICDTVQQMVQQFTDRPLIPQAEMARMLYLDIPGSFVLEDEIDDWYPEDTSDGYGVSFAADEDHASDLKLASDSSNCEIEEVRVTGDTPKELTLGDRYMGIDEEFQTTNTDYDITLQIMNPIEHRVSRVIDTHCHPDNPDISTGPIYMERVSLARTEATSHSILPTHAYFDDSYHQALVENGDYSMDFDRIRLKQSDVDWYRDPDKYFQPKMNIGSAQRRVGTQKEVLTALKKRNADVPEMGDAINMKDTAKAIAKRFRSTFLNVDGEDCLRASMDVMTKCLEYHKKWGKHMDLQGVNVAAETDLCRYQHMLKSDVKPVVTDTLHLERAVAATITFHSKGVTSNFSPFFTACFEKLSLALKSRFIVPIGKISSLELKNVRLNNRYFLEADLSKFDKSQGELHLEFQREILLALGFPAPLTNWWSDFHRDSYLSDPHAKVGMSVSFQRRTGDAFTYFGNTLVTMAMIAYASDLSDCDCAIFSGDDSLIISKVKPVLDTDMFTSLFNMEIKVMDPSVPYVCSKFLVETEMGNLVSVPDPLREIQRLAKRKILRDEQMLRAHFVSFCDRMKFINQLDEKMITTLCHFVYLKYGKEKPWIFEEVRAALAAFSLYSENFLRFSDCYCTEGIRVYQMSDPVCKFKRTTEERKTDGDWFHNWKNPKFPGVLDKVYRTIGIYSSDCSTKELPVKRIGRLHEALERESLKLANDRRTTQRLKKKVDDYATGRGGLTSVDALLVKSHCETFKPSDLR.

The RdRp catalytic domain occupies 459-572 (RYFLEADLSK…ISKVKPVLDT (114 aa)).

The protein belongs to the ssRNA positive-strand viruses RNA-directed RNA polymerase family. Interacts with replication protein 1a.

It carries out the reaction RNA(n) + a ribonucleoside 5'-triphosphate = RNA(n+1) + diphosphate. In terms of biological role, RNA-dependent RNA polymerase which replicates the viral genome composed of 3 RNA segments, RNA1, RNA2 and RNA3. This chain is RNA-directed RNA polymerase 2a, found in Bromus inermis (Smooth brome grass).